We begin with the raw amino-acid sequence, 67 residues long: Large ribosomal subunit protein uL29 (67 aa).

It belongs to the universal ribosomal protein uL29 family.

In Solibacter usitatus (strain Ellin6076), this protein is Large ribosomal subunit protein uL29.